An 864-amino-acid polypeptide reads, in one-letter code: DNA mismatch repair protein MutS (864 aa).

607–614 is a binding site for ATP; that stretch reads GPNMGGKS.

This sequence belongs to the DNA mismatch repair MutS family.

In terms of biological role, this protein is involved in the repair of mismatches in DNA. It is possible that it carries out the mismatch recognition step. This protein has a weak ATPase activity. This Neisseria gonorrhoeae (strain NCCP11945) protein is DNA mismatch repair protein MutS.